The sequence spans 385 residues: Isocitrate dehydrogenase [NAD] subunit beta, mitochondrial (385 aa).

The transit peptide at 1–34 (MAALSGVRWLTRALVSAGNPGAWRGLSTSAAAHA) directs the protein to the mitochondrion. Position 199 is an N6-acetyllysine (lysine 199).

Belongs to the isocitrate and isopropylmalate dehydrogenases family. As to quaternary structure, heterooligomer of subunits alpha (IDH3A), beta (IDH3B), and gamma (IDH3G) in the apparent ratio of 2:1:1. The heterodimer containing one IDH3A and one IDH3B subunit and the heterodimer containing one IDH3A and one IDH3G subunit assemble into a heterotetramer (which contains two subunits of IDH3A, one of IDH3B and one of IDH3G) and further into the heterooctamer.

The protein localises to the mitochondrion. With respect to regulation, the heterotetramer and the heterodimer composed of IDH3A and IDH3G subunits can be allosterically activated by citrate (CIT) or/and ADP, and the two activators can act independently or synergistically. The heterodimer composed of IDH3A and IDH3B subunits cannot be allosterically regulated and the allosteric regulation of the heterotetramer is through the IDH3G subunit and not the IDH3B subunit. The IDH3G subunit contains the allosteric site which consists of a CIT-binding site and an ADP-binding site, and the binding of CIT and ADP causes conformational changes at the allosteric site which are transmitted to the active site in the catalytic subunit (IDH3A) through a cascade of conformational changes at the heterodimer interface, leading to stabilization of the isocitrate-binding at the active site and thus activation of the enzyme. ATP can activate the heterotetramer and the heterodimer composed of IDH3A and IDH3G subunits at low concentrations but inhibits their activities at high concentrations, whereas ATP exhibits only inhibitory effect on the heterodimer composed of IDH3A and IDH3B subunits. Functionally, plays a structural role to facilitate the assembly and ensure the full activity of the enzyme catalyzing the decarboxylation of isocitrate (ICT) into alpha-ketoglutarate. The heterodimer composed of the alpha (IDH3A) and beta (IDH3B) subunits and the heterodimer composed of the alpha (IDH3A) and gamma (IDH3G) subunits, have considerable basal activity but the full activity of the heterotetramer (containing two subunits of IDH3A, one of IDH3B and one of IDH3G) requires the assembly and cooperative function of both heterodimers. This Macaca fascicularis (Crab-eating macaque) protein is Isocitrate dehydrogenase [NAD] subunit beta, mitochondrial (IDH3B).